The primary structure comprises 144 residues: Transcription antitermination protein NusB (144 aa).

It belongs to the NusB family.

In terms of biological role, involved in transcription antitermination. Required for transcription of ribosomal RNA (rRNA) genes. Binds specifically to the boxA antiterminator sequence of the ribosomal RNA (rrn) operons. The chain is Transcription antitermination protein NusB from Paraburkholderia xenovorans (strain LB400).